A 211-amino-acid chain; its full sequence is Probable oligoribonuclease (211 aa).

An Exonuclease domain is found at 38 to 202 (IVWMDLEMTG…DDIRESIKEL (165 aa)). The active site involves Tyr159.

It belongs to the oligoribonuclease family.

In terms of biological role, 3'-to-5' exoribonuclease specific for small oligoribonucleotides. This chain is Probable oligoribonuclease, found in Drosophila melanogaster (Fruit fly).